A 1021-amino-acid polypeptide reads, in one-letter code: Transmembrane protein 132A (1021 aa).

An N-terminal signal peptide occupies residues 1 to 32; that stretch reads MTERAAAAPRGPYGAWLCLLVALALEVVRVGS. The Extracellular portion of the chain corresponds to 33–848; that stretch reads NQNTLDPIYL…VTDLELGMYA (816 aa). The interval 207-226 is disordered; that stretch reads PAGEGPGGCGPGTEEEPKEQ. Asn-276 is a glycosylation site (N-linked (GlcNAc...) asparagine). Residues 606 to 913 are binds to HSPA5/GRP78; that stretch reads IEVRSPLSDS…QLDRCSSSSP (308 aa). Positions 666-1021 are confers cellular localization similar to full-length form; it reads LPAPKQEVAL…NYMERIRGSS (356 aa). The tract at residues 793–835 is disordered; sequence AGDMGSHVGPGIRGKFERAEEEAGKEENEAKEEEEDEEEMVPA. The segment covering 806-820 has biased composition (basic and acidic residues); the sequence is GKFERAEEEAGKEEN. Residues 821–832 show a composition bias toward acidic residues; that stretch reads EAKEEEEDEEEM. Residues 849–869 form a helical membrane-spanning segment; the sequence is LLGIFCLAFLIFLVNGVVFVL. Over 870–1021 the chain is Cytoplasmic; that stretch reads RYQRKEPPDS…NYMERIRGSS (152 aa). The tract at residues 903–955 is disordered; that stretch reads RQLDRCSSSSPPKGEGGCPCESGAGGDTSTVAPSASESPAGSTSTLARKEAGG. Residues 929–948 are compositionally biased toward polar residues; it reads DTSTVAPSASESPAGSTSTL.

It belongs to the TMEM132 family. As to quaternary structure, interacts with HSPA5/GRP78. In terms of tissue distribution, expressed in the brain in neuronal cells of the hypothalamus, thalamus, cerebral cortex, amygdala, and cerebellum.

It localises to the golgi apparatus membrane. The protein resides in the endoplasmic reticulum membrane. Its function is as follows. May play a role in embryonic and postnatal development of the brain. Increased resistance to cell death induced by serum starvation in cultured cells. Regulates cAMP-induced GFAP gene expression via STAT3 phosphorylation. The protein is Transmembrane protein 132A (Tmem132a) of Rattus norvegicus (Rat).